The sequence spans 305 residues: Glutaminase (305 aa).

Substrate is bound by residues S61, N113, E158, N165, Y189, Y241, and V259.

The protein belongs to the glutaminase family. In terms of assembly, homotetramer.

It carries out the reaction L-glutamine + H2O = L-glutamate + NH4(+). In Clostridium botulinum (strain ATCC 19397 / Type A), this protein is Glutaminase.